Reading from the N-terminus, the 644-residue chain is Exoribonuclease 2 (644 aa).

The 328-residue stretch at 189-516 (RQDLTALNFV…NHRLLKAVIK (328 aa)) folds into the RNB domain. An S1 motif domain is found at 561-643 (NTRFAAEIID…ETRSIIARPA (83 aa)).

It belongs to the RNR ribonuclease family. RNase II subfamily.

The protein resides in the cytoplasm. The enzyme catalyses Exonucleolytic cleavage in the 3'- to 5'-direction to yield nucleoside 5'-phosphates.. Involved in mRNA degradation. Hydrolyzes single-stranded polyribonucleotides processively in the 3' to 5' direction. The chain is Exoribonuclease 2 from Salmonella choleraesuis (strain SC-B67).